The following is a 187-amino-acid chain: MAALQSSFAGLSTSFFGQRFSPPLSLPPLVKSTEGPCLIQAKLKRWERKECKPNSLPVLHKMHVKLGDTVKIISGHDKGKVGEITEIIKHNSKVVVKDVNLKTKHVKSRSEDEPGQIVKIEAPIHSSNVMLYSKEQKVASRVGHKTLDNGKRVRYLIKTGEIIDSAENWKKAVKEKEKTTEAVAAAS.

The transit peptide at 1 to 41 (MAALQSSFAGLSTSFFGQRFSPPLSLPPLVKSTEGPCLIQA) directs the protein to the chloroplast.

The protein belongs to the universal ribosomal protein uL24 family. In terms of assembly, part of the 50S ribosomal subunit.

It localises to the plastid. The protein localises to the chloroplast. In terms of biological role, one of two assembly initiator proteins, it binds directly to the 5'-end of the 23S rRNA, where it nucleates assembly of the 50S subunit. This is Large ribosomal subunit protein uL24c (RPL24) from Nicotiana tabacum (Common tobacco).